The following is a 695-amino-acid chain: C6 finger domain transcription factor nscR (695 aa).

Residues 17-43 constitute a DNA-binding region (zn(2)-C6 fungal-type); it reads CELCRERKVKCDKLDPCTNCASAGVVC. Residues 101–113 show a composition bias toward low complexity; it reads SMRSSASQSSNQD. Residues 101-146 are disordered; sequence SMRSSASQSSNQDQESRDAIESISNETEDASAPTPDSSRMPLGDGG.

It localises to the nucleus. Functionally, transcription factor that specifically regulates the neosartoricin B biosynthesis gene cluster. This chain is C6 finger domain transcription factor nscR, found in Arthroderma otae (strain ATCC MYA-4605 / CBS 113480) (Microsporum canis).